A 153-amino-acid chain; its full sequence is Glucose-6-phosphate 1-dehydrogenase (153 aa).

Positions 21 and 120 each coordinate NADP(+). Lysine 120 is a D-glucose 6-phosphate binding site.

This sequence belongs to the glucose-6-phosphate dehydrogenase family.

The protein localises to the cytoplasm. It is found in the cytosol. The catalysed reaction is D-glucose 6-phosphate + NADP(+) = 6-phospho-D-glucono-1,5-lactone + NADPH + H(+). It functions in the pathway carbohydrate degradation; pentose phosphate pathway; D-ribulose 5-phosphate from D-glucose 6-phosphate (oxidative stage): step 1/3. Its function is as follows. Cytosolic glucose-6-phosphate dehydrogenase that catalyzes the first and rate-limiting step of the oxidative branch within the pentose phosphate pathway/shunt, an alternative route to glycolysis for the dissimilation of carbohydrates and a major source of reducing power and metabolic intermediates for fatty acid and nucleic acid biosynthetic processes. This chain is Glucose-6-phosphate 1-dehydrogenase (Zw), found in Drosophila simulans (Fruit fly).